We begin with the raw amino-acid sequence, 614 residues long: MIKKASLLTACSVTAFSAWAQDTSPDTLVVTANRFEQPRSTVLAPTTVVTRQDIDRWQSTSVNDVLRRLPGVDITQNGGSGQLSSIFIRGTNASHVLVLIDGVRLNLAGVSGSADLSQFPIALVQRVEYIRGPRSAVYGSDAIGGVVNIITTRDHPGTEISAGWGSNSYQNYDVSTQQQLGDKTRVTLLGDYAHTHGYDVVAYGNTGTQAQPDNDGFLSKTLYGALEHNFTDAWSGFVRGYGYDNRTNYDAYYSPGLPLVDTRKLYSQSWDAGLRYNGELIKSQLITSYSHSKDYNYDPHYGRYDSSATLDEMKQYTVQWANNIIIGHGNIGAGVDWQKQSTAPGTAYVEDGYDQRNTGIYLTGLQQVGDFTFEGAGRSDDNSQFGRHGTWQTSAGWEFIEGYRFIASYGTSYKAPNLGQLYGSYGNPNLNPEKSKQWEGAFEGLTAGVNWRISGYRNDVSDLIDYDDHTLKYYNEGKARIKGVEATANFDTGPLTHTVSYDYVDARNAITDTPLLRRAKQQVKYQLDWQLYDFDWGITYQYLGTRYDKDYSSYPYQTVKMGGVSLWDLAVAYPVTSHLTVRGKIANLFDKDYETVYGYQTAGREYTLXGSYTF.

The first 20 residues, 1-20, serve as a signal peptide directing secretion; the sequence is MIKKASLLTACSVTAFSAWA. The TonB box signature appears at 26–33; it reads DTLVVTAN. One can recognise a TBDR plug domain in the interval 38-152; it reads PRSTVLAPTT…IGGVVNIITT (115 aa). Cyanocob(III)alamin is bound by residues Leu83, Ser85, Asn92, and 110–111; that span reads VS. Residues 155–614 form the TBDR beta-barrel domain; the sequence is HPGTEISAGW…EYTLXGSYTF (460 aa). 3 beta stranded membrane-spanning segments follow: residues 158–165, 169–178, and 184–195; these read TEISAGWG, YQNYDVSTQQ, and TRVTLLGDYAHT. Residues Asp199, Gln211, Asp213, and Asp215 each coordinate Ca(2+). The next 2 membrane-spanning stretches (beta stranded) occupy residues 217–227 and 232–248; these read FLSKTLYGALE and DAWSGFVRGYGYDNRTN. The Ca(2+) site is built by Tyr249 and Asp250. A cyanocob(III)alamin-binding site is contributed by Ala251. Residue Asp261 coordinates Ca(2+). Transmembrane regions (beta stranded) follow at residues 263 to 277, 279 to 296, 309 to 325, 328 to 337, 353 to 369, 371 to 381, 385 to 400, 403 to 417, 434 to 443, 449 to 458, 473 to 490, 494 to 509, 517 to 529, and 535 to 550; these read RKLYSQSWDAGLRYN, ELIKSQLITSYSHSKDYN, TLDEMKQYTVQWANNII, HGNIGAGVDW, YDQRNTGIYLTGLQQVG, FTFEGAGRSDD, FGRHGTWQTSAGWEFI, YRFIASYGTSYKAPN, KSKQWEGAFE, VNWRISGYRN, YYNEGKARIKGVEATANF, PLTHTVSYDYVDARNA, RRAKQQVKYQLDW, and DWGITYQYLGTRYDKD. Thr309 contacts cyanocob(III)alamin. Position 517 (Arg517) interacts with cyanocob(III)alamin. Tyr551 serves as a coordination point for cyanocob(III)alamin. The next 3 beta stranded transmembrane spans lie at 558-572, 585-596, and 602-614; these read TVKMGGVSLWDLAVA, IANLFDKDYETV, and AGREYTLXGSYTF. Residues 597–614 carry the TonB C-terminal box motif; that stretch reads YGYQTAGREYTLXGSYTF.

Belongs to the TonB-dependent receptor family. BtuB (TC 1.B.14.3.1) subfamily.

It is found in the cell outer membrane. Its function is as follows. Involved in the active translocation of vitamin B12 (cyanocobalamin) across the outer membrane to the periplasmic space. It derives its energy for transport by interacting with the trans-periplasmic membrane protein TonB. This Escherichia coli O6:H1 (strain CFT073 / ATCC 700928 / UPEC) protein is Vitamin B12 transporter BtuB.